Consider the following 473-residue polypeptide: Double-stranded RNA-binding protein 7 (473 aa).

Pro residues predominate over residues 1-10 (MDMPPTPLPP). The disordered stretch occupies residues 1–22 (MDMPPTPLPPETANTSPAPNGA). DRBM domains lie at 33–102 (VFKS…EIVK) and 118–185 (LCKN…AIQG). Basic and acidic residues-rich tracts occupy residues 286–307 (KRVE…ENQH), 317–327 (DEARVEQEPSR), and 416–427 (VDARVVKEESPR). Disordered regions lie at residues 286–329 (KRVE…SRDI) and 393–473 (QLNE…MSEE). A compositionally biased stretch (polar residues) spans 433-450 (EATNMKETPKNSAVCNSP).

Its function is as follows. Binds double-stranded RNA. This is Double-stranded RNA-binding protein 7 (DRB7) from Oryza sativa subsp. japonica (Rice).